Consider the following 91-residue polypeptide: N(2)-fixation sustaining protein CowN (91 aa).

The protein belongs to the CowN family.

Its function is as follows. Is required to sustain N(2)-dependent growth in the presence of low levels of carbon monoxide (CO). Probably acts by protecting the N(2) fixation ability of the nitrogenase complex, which is inactivated in the presence of CO. This chain is N(2)-fixation sustaining protein CowN, found in Beijerinckia indica subsp. indica (strain ATCC 9039 / DSM 1715 / NCIMB 8712).